Reading from the N-terminus, the 155-residue chain is 3-hydroxyacyl-[acyl-carrier-protein] dehydratase FabZ (155 aa).

The active site involves histidine 54.

Belongs to the thioester dehydratase family. FabZ subfamily.

Its subcellular location is the cytoplasm. The enzyme catalyses a (3R)-hydroxyacyl-[ACP] = a (2E)-enoyl-[ACP] + H2O. Its function is as follows. Involved in unsaturated fatty acids biosynthesis. Catalyzes the dehydration of short chain beta-hydroxyacyl-ACPs and long chain saturated and unsaturated beta-hydroxyacyl-ACPs. The polypeptide is 3-hydroxyacyl-[acyl-carrier-protein] dehydratase FabZ (Burkholderia lata (strain ATCC 17760 / DSM 23089 / LMG 22485 / NCIMB 9086 / R18194 / 383)).